We begin with the raw amino-acid sequence, 164 residues long: UPF0114 protein BCI_0033 (164 aa).

3 helical membrane-spanning segments follow: residues 15–35 (LLFP…LKFF), 53–73 (LILI…LVMV), and 136–156 (IMWC…MAYI).

Belongs to the UPF0114 family.

It is found in the cell membrane. This chain is UPF0114 protein BCI_0033, found in Baumannia cicadellinicola subsp. Homalodisca coagulata.